Reading from the N-terminus, the 308-residue chain is Methionyl-tRNA formyltransferase (308 aa).

110-113 serves as a coordination point for (6S)-5,6,7,8-tetrahydrofolate; it reads SLLP.

Belongs to the Fmt family.

It carries out the reaction L-methionyl-tRNA(fMet) + (6R)-10-formyltetrahydrofolate = N-formyl-L-methionyl-tRNA(fMet) + (6S)-5,6,7,8-tetrahydrofolate + H(+). Functionally, attaches a formyl group to the free amino group of methionyl-tRNA(fMet). The formyl group appears to play a dual role in the initiator identity of N-formylmethionyl-tRNA by promoting its recognition by IF2 and preventing the misappropriation of this tRNA by the elongation apparatus. In Neisseria meningitidis serogroup A / serotype 4A (strain DSM 15465 / Z2491), this protein is Methionyl-tRNA formyltransferase.